The chain runs to 322 residues: Acetyl-coenzyme A carboxylase carboxyl transferase subunit alpha (322 aa).

In terms of domain architecture, CoA carboxyltransferase C-terminal spans 30 to 293; it reads ALDISAEITR…RQALQESLRK (264 aa).

It belongs to the AccA family. Acetyl-CoA carboxylase is a heterohexamer composed of biotin carboxyl carrier protein (AccB), biotin carboxylase (AccC) and two subunits each of ACCase subunit alpha (AccA) and ACCase subunit beta (AccD).

Its subcellular location is the cytoplasm. It catalyses the reaction N(6)-carboxybiotinyl-L-lysyl-[protein] + acetyl-CoA = N(6)-biotinyl-L-lysyl-[protein] + malonyl-CoA. The protein operates within lipid metabolism; malonyl-CoA biosynthesis; malonyl-CoA from acetyl-CoA: step 1/1. Functionally, component of the acetyl coenzyme A carboxylase (ACC) complex. First, biotin carboxylase catalyzes the carboxylation of biotin on its carrier protein (BCCP) and then the CO(2) group is transferred by the carboxyltransferase to acetyl-CoA to form malonyl-CoA. In Nitrosomonas eutropha (strain DSM 101675 / C91 / Nm57), this protein is Acetyl-coenzyme A carboxylase carboxyl transferase subunit alpha.